The primary structure comprises 631 residues: Mitochondrial Rho GTPase (631 aa).

At 1–605 (MRAGRVRPLR…TQADLKSSTF (605 aa)) the chain is on the cytoplasmic side. The 167-residue stretch at 15 to 181 (KKDVRILLVG…FYYAQKAVLH (167 aa)) folds into the Miro 1 domain. Arginine 27, glycine 29, lysine 30, threonine 31, and serine 32 together coordinate GTP. Threonine 31 is a binding site for Mg(2+). A Mg(2+)-binding site is contributed by aspartate 70. Serine 72 provides a ligand contact to GTP. Lysine 105 is modified (N6-acetyllysine). 5 residues coordinate GTP: asparagine 131, lysine 132, aspartate 134, alanine 162, and lysine 163. Residue lysine 166 forms a Glycyl lysine isopeptide (Lys-Gly) (interchain with G-Cter in ubiquitin) linkage. The EF-hand 1 domain maps to 197–232 (ACIKALTRIFKISDQDNDGTLNDAELNFFQRICFNT). Residues aspartate 210, aspartate 212, aspartate 214, threonine 216, and glutamate 221 each coordinate Ca(2+). Lysine 248 is covalently cross-linked (Glycyl lysine isopeptide (Lys-Gly) (interchain with G-Cter in ubiquitin)). The region spanning 317–352 (HAYLFLQSTFDKHDLDRDCALSPDELKDLFQVFPYI) is the EF-hand 2 domain. Ca(2+) contacts are provided by aspartate 330, aspartate 332, aspartate 334, alanine 336, and glutamate 341. The Miro 2 domain maps to 429–592 (RNVFRCNVIG…FVKLTTMAMY (164 aa)). Positions 441, 442, 443, 444, 445, 446, 460, 541, 543, 571, and 572 each coordinate GTP. Glycine 441 contributes to the Mg(2+) binding site. A Glycyl lysine isopeptide (Lys-Gly) (interchain with G-Cter in ubiquitin) cross-link involves residue lysine 585. The chain crosses the membrane as a helical; Anchor for type IV membrane protein span at residues 606–628 (WLRASFGATVFAVVGFAMYRALL). Topologically, residues 629-631 (KQR) are mitochondrial intermembrane.

The protein belongs to the mitochondrial Rho GTPase family. In terms of assembly, homodimer. Interacts with the kinesin-binding proteins TRAK1/OIP106 and TRAK2/GRIF1, forming a link between mitochondria and the trafficking apparatus of the microtubules. Interacts with RAP1GDS1. Interacts with ARMCX1. Found in a complex with KIF5B, OGT, RHOT2 and TRAK1. In terms of processing, ubiquitinated by PRKN during mitophagy, leading to its degradation and enhancement of mitophagy. Deubiquitinated by USP30. Post-translationally, acetylation on Lys-105 decreases sensitivity of mitochondrial transport to elevated Ca(2+) levels, increases mitochondrial transport and promotes axon growth. Deacetylated by HDAC6 which blocks mitochondrial transport and mediates axon growth inhibition.

The protein resides in the mitochondrion outer membrane. It catalyses the reaction GTP + H2O = GDP + phosphate + H(+). It carries out the reaction ATP + H2O = ADP + phosphate + H(+). The enzyme catalyses UTP + H2O = UDP + phosphate + H(+). Its function is as follows. Atypical mitochondrial nucleoside-triphosphatase (NTPase) involved in mitochondrial trafficking. Probably involved in control of anterograde transport of mitochondria and their subcellular distribution. Promotes mitochondrial fission during high calcium conditions. Can hydrolyze GTP, ATP and UTP. In Rattus norvegicus (Rat), this protein is Mitochondrial Rho GTPase.